We begin with the raw amino-acid sequence, 4043 residues long: Polyketide synthase-nonribosomal peptide synthetase (4043 aa).

The Ketosynthase family 3 (KS3) domain maps to 8–446 (SEPIAIIGTG…GANSHAILES (439 aa)). Residues Cys181, His320, and His366 each act as for beta-ketoacyl synthase activity in the active site. The segment at 557-877 (VFTGQGAQWA…SRGNSDVEAF (321 aa)) is acyl transferase. An N-terminal hotdog fold region spans residues 944–1078 (NELLGRQVLD…CRLRITVGDS (135 aa)). The PKS/mFAS DH domain occupies 944 to 1246 (NELLGRQVLD…TQPLSSPTEA (303 aa)). Residues 945-1243 (ELLGRQVLDG…GLQTQPLSSP (299 aa)) are dehydratase (DH) domain. The Proton acceptor; for dehydratase activity role is filled by His976. A C-terminal hotdog fold region spans residues 1093 to 1246 (LLEVESDRFY…TQPLSSPTEA (154 aa)). The Proton donor; for dehydratase activity role is filled by Asp1154. A methyltransferase (MT) domain region spans residues 1400 to 1585 (RYTKYLAAMA…GIETAIPHHD (186 aa)). Positions 2115 to 2288 (TYWLVGLTGG…NASAVHIGAI (174 aa)) are ketoreductase (KR)domain. One can recognise a Carrier 1 domain in the interval 2394-2475 (SSSADIYDII…EMVTQAQELL (82 aa)). A peptidyl carrier protein region spans residues 2395-2472 (SSADIYDIIS…TVGEMVTQAQ (78 aa)). Position 2435 is an O-(pantetheine 4'-phosphoryl)serine (Ser2435). Disordered regions lie at residues 2476 to 2575 (PKEL…DPSR) and 2587 to 2630 (EKHL…SQII). Composition is skewed to polar residues over residues 2494–2512 (PKNTVQPKQQTKKTIQLQN) and 2520–2534 (ALSQQVSSGVQNMIK). Basic and acidic residues predominate over residues 2537–2550 (PPKEAEAKQPRPEV). Residues 2617 to 2627 (TSSSSSSTSAS) show a composition bias toward low complexity. The interval 2640-3069 (KSVPMAFGQS…NPALRLNVPP (430 aa)) is condensation. The interval 3102-3502 (EIVERYPTHV…EGNLILGGRI (401 aa)) is adenylation. In terms of domain architecture, Carrier 2 spans 3617–3697 (TDESPSMAKM…GMVSLIDHSE (81 aa)). The interval 3622–3694 (SMAKMRDVWA…SLTGMVSLID (73 aa)) is thiolation. Ser3657 is subject to O-(pantetheine 4'-phosphoryl)serine. Positions 3735–3954 (LTGATGFLGR…DFVSADRVAM (220 aa)) are reductase-like.

It in the C-terminal section; belongs to the NRP synthetase family.

Its pathway is mycotoxin biosynthesis. In terms of biological role, hybrid PKS-NRPS synthetase; part of the gene cluster that mediates the biosynthesis of the mycotoxins cytochalasins E and K. The hybrid PKS-NRPS synthetase ccsA and the enoyl reductase ccsC are responsible for fusion of phenylalanine with an octaketide backbone and subsequent release of the stable tetramic acid precursor. The polyketide synthase module (PKS) of the PKS-NRPS ccsA is responsible for the synthesis of the octaketide backbone. The downstream nonribosomal peptide synthetase (NRPS) amidates the carboxyl end of the octaketide with a phenylalanine. A reductase-like domain (R) at the C-terminus catalyzes the reductive release of the polyketide-amino acid intermediate. Because ccsA lacks a designated enoylreductase (ER) domain, the required activity is provided the enoyl reductase ccsC. Upon formation of the 11-membered carbocycle-fused perhydroisoindolone intermediate, a number of oxidative steps are required to afford the final cytochalasin E and K, including two hydroxylations at C17 and C18, one alcohol oxidation at C17, one epoxidation at C6 and C7 and two Baeyer-Villiger oxidations. The oxidative modification at C17, C18 and the C6-C7 epoxidation are likely to be catalyzed by the two cytochrome P450 oxygenases ccsD and ccsG. CcsD may be responsible for the epoxidation of the C6-C7 double bond. CcsG may be responsible for the successive oxidative modifications at C17 and C18. The double Baeyer-Villiger oxidations of ketocytochalasin to precytochalasin and cytochalasin Z(16) are among the final steps leading to cytochalasin E and K and are catalyzed by ccsB. The first oxygen insertion step follows that of the classic BVMO mechanism, generating the ester precytochalasin. Release of precytochalasin into an aqueous environment can generate the shunt product iso-precytochalasin through spontaneous isomerization. Alternatively, precytochalasin can undergo further oxidation by ccsB to yield the in-line carbonate-containing cytochalasin Z(16). Cytochalasin Z(16) is a precursor to cytochalasin E and cytochalasin K, whereas iso-precytochalasin is a precursor to cytochalasin Z(17) and rosellichalasin. The hydrolyase ccsE may catalyze hydrolysis of epoxide bond in cytochalasin E to afford cytochalasin K. The function of ccsF has not been assigned but it may play a role in post-PKS-NRPS biosynthetic step, resistance or transport of cytochalasins and related PKS-NRPS products. The polypeptide is Polyketide synthase-nonribosomal peptide synthetase (Aspergillus clavatus (strain ATCC 1007 / CBS 513.65 / DSM 816 / NCTC 3887 / NRRL 1 / QM 1276 / 107)).